Here is a 444-residue protein sequence, read N- to C-terminus: Na(+)-translocating NADH-quinone reductase subunit A (444 aa).

The protein belongs to the NqrA family. As to quaternary structure, composed of six subunits; NqrA, NqrB, NqrC, NqrD, NqrE and NqrF.

It catalyses the reaction a ubiquinone + n Na(+)(in) + NADH + H(+) = a ubiquinol + n Na(+)(out) + NAD(+). Functionally, NQR complex catalyzes the reduction of ubiquinone-1 to ubiquinol by two successive reactions, coupled with the transport of Na(+) ions from the cytoplasm to the periplasm. NqrA to NqrE are probably involved in the second step, the conversion of ubisemiquinone to ubiquinol. This Shewanella amazonensis (strain ATCC BAA-1098 / SB2B) protein is Na(+)-translocating NADH-quinone reductase subunit A.